Reading from the N-terminus, the 202-residue chain is 3-isopropylmalate dehydratase small subunit (202 aa).

It belongs to the LeuD family. LeuD type 1 subfamily. As to quaternary structure, heterodimer of LeuC and LeuD.

It carries out the reaction (2R,3S)-3-isopropylmalate = (2S)-2-isopropylmalate. It functions in the pathway amino-acid biosynthesis; L-leucine biosynthesis; L-leucine from 3-methyl-2-oxobutanoate: step 2/4. In terms of biological role, catalyzes the isomerization between 2-isopropylmalate and 3-isopropylmalate, via the formation of 2-isopropylmaleate. The chain is 3-isopropylmalate dehydratase small subunit from Rhizobium rhizogenes (strain K84 / ATCC BAA-868) (Agrobacterium radiobacter).